The primary structure comprises 316 residues: Ribosomal RNA small subunit methyltransferase H (316 aa).

S-adenosyl-L-methionine contacts are provided by residues 35–37 (GGH), D55, F79, D101, and Q108.

The protein belongs to the methyltransferase superfamily. RsmH family.

It localises to the cytoplasm. The catalysed reaction is cytidine(1402) in 16S rRNA + S-adenosyl-L-methionine = N(4)-methylcytidine(1402) in 16S rRNA + S-adenosyl-L-homocysteine + H(+). Functionally, specifically methylates the N4 position of cytidine in position 1402 (C1402) of 16S rRNA. The protein is Ribosomal RNA small subunit methyltransferase H of Aliivibrio fischeri (strain ATCC 700601 / ES114) (Vibrio fischeri).